We begin with the raw amino-acid sequence, 172 residues long: C-phycocyanin beta chain (172 aa).

Residues asparagine 35, aspartate 39, asparagine 72, arginine 77, cysteine 82, 82–88, 149–151, and cysteine 153 contribute to the (2R,3E)-phycocyanobilin site; these read CLRDMEI and TIG. N4-methylasparagine is present on asparagine 72.

This sequence belongs to the phycobiliprotein family. Heterodimer of an alpha and a beta subunit, which further assembles into trimers and the trimers into hexamers. The basic functional unit of phycobiliproteins is a ring-shaped hexamer formed from two back-to-back trimers contacting via the alpha chain subunits. The trimers are composed of alpha/beta subunit heterodimers arranged around a three-fold axis of symmetry. The phycoerythrins also contain a gamma subunit which is located in the center of the hexamer. Contains two covalently linked phycocyanobilin chromophores.

The protein localises to the plastid. Its subcellular location is the chloroplast thylakoid membrane. In terms of biological role, light-harvesting photosynthetic tetrapyrrole chromophore-protein from the phycobiliprotein complex (phycobilisome, PBS). Phycocyanin is the major phycobiliprotein in the PBS rod. The protein is C-phycocyanin beta chain (cpcB) of Cyanidium caldarium (Red alga).